Consider the following 230-residue polypeptide: Transmembrane 4 L6 family member 20 (230 aa).

At 1–11 (MTCCEGWTSCN) the chain is on the lumenal side. The chain crosses the membrane as a helical span at residues 12-32 (GFSLLVLLLLGVTLNAIPLIL). The Cytoplasmic portion of the chain corresponds to 33–44 (NFVDEDQFFENP). The chain crosses the membrane as a helical span at residues 45-65 (ISCFEWWFPGIIGAGVMAIPA). At 66–83 (TTMSLAARKRACCNNKTG) the chain is on the lumenal side. Residues 84-104 (MFLSSLLNAITVIGAAYCLLV) form a helical membrane-spanning segment. The Cytoplasmic portion of the chain corresponds to 105-185 (SIQALAEGPL…HFNSIENQHR (81 aa)). A helical membrane pass occupies residues 186–206 (IIHFSVFLGLLLVGILEILFG). Topologically, residues 207–230 (LSQIIIGFFGCLCGGVSNGRSQIV) are lumenal.

It belongs to the L6 tetraspanin family. Glycosylated at Asn-132 in presence of ceramide which inverts the orientation of TM4SF20 in membranes exposing these residues to the endoplasmic reticulum lumen. In terms of processing, cleaved by signal peptidase at Ser-14 but the peptide does not act as a signal peptide. Cleavage is inhibited by ceramide which inverts the orientation of TM4SF20 in membranes exposing the N-terminus to the cytosol and not to the endoplasmic reticulum lumen.

The protein resides in the membrane. It localises to the endoplasmic reticulum membrane. In terms of biological role, polytopic transmembrane protein. Inhibits regulated intramembrane proteolysis (RIP) of CREB3L1, inhibiting its activation and the induction of collagen synthesis. In response to ceramide, which alters TM4SF20 membrane topology, stimulates RIP activation of CREB3L1. Ceramide reverses the direction through which transmembrane helices are translocated into the endoplasmic reticulum membrane during translation of TM4SF20, this mechanism is called 'regulated alternative translocation' (RAT) and regulates the function of the transmembrane protein. This Bos taurus (Bovine) protein is Transmembrane 4 L6 family member 20 (TM4SF20).